The primary structure comprises 327 residues: GMP reductase (327 aa).

Residue cysteine 175 is the Thioimidate intermediate of the active site. Residue 204-227 participates in NADP(+) binding; that stretch reads IIADGGIRTNGDVAKSIRFGATMV.

It belongs to the IMPDH/GMPR family. GuaC type 2 subfamily.

The catalysed reaction is IMP + NH4(+) + NADP(+) = GMP + NADPH + 2 H(+). Its function is as follows. Catalyzes the irreversible NADPH-dependent deamination of GMP to IMP. It functions in the conversion of nucleobase, nucleoside and nucleotide derivatives of G to A nucleotides, and in maintaining the intracellular balance of A and G nucleotides. The protein is GMP reductase of Bacillus cereus (strain ZK / E33L).